The primary structure comprises 132 residues: ATP synthase epsilon chain 1 (132 aa).

This sequence belongs to the ATPase epsilon chain family. As to quaternary structure, F-type ATPases have 2 components, CF(1) - the catalytic core - and CF(0) - the membrane proton channel. CF(1) has five subunits: alpha(3), beta(3), gamma(1), delta(1), epsilon(1). CF(0) has three main subunits: a, b and c.

The protein resides in the cell inner membrane. Its function is as follows. Produces ATP from ADP in the presence of a proton gradient across the membrane. The protein is ATP synthase epsilon chain 1 of Cereibacter sphaeroides (strain ATCC 17023 / DSM 158 / JCM 6121 / CCUG 31486 / LMG 2827 / NBRC 12203 / NCIMB 8253 / ATH 2.4.1.) (Rhodobacter sphaeroides).